Reading from the N-terminus, the 150-residue chain is S-protein homolog 3 (150 aa).

Residues 1-23 form the signal peptide; sequence MKNILKTQVHVVVIYLLIKIAFS. 2 N-linked (GlcNAc...) asparagine glycosylation sites follow: Asn-32 and Asn-70.

Belongs to the plant self-incompatibility (S1) protein family.

The protein resides in the secreted. The protein is S-protein homolog 3 of Arabidopsis thaliana (Mouse-ear cress).